A 718-amino-acid chain; its full sequence is Neutral ceramidase B (718 aa).

Positions 1–20 are cleaved as a signal peptide; it reads MINSFKKLIILISLVIILLS. 2 N-linked (GlcNAc...) asparagine glycosylation sites follow: Asn-224 and Asn-252. The active-site Nucleophile is Ser-298. Residues Asn-358, Asn-378, Asn-391, Asn-421, Asn-422, Asn-577, Asn-610, and Asn-614 are each glycosylated (N-linked (GlcNAc...) asparagine).

This sequence belongs to the neutral ceramidase family.

The protein localises to the secreted. It carries out the reaction an N-acylsphing-4-enine + H2O = sphing-4-enine + a fatty acid. Its function is as follows. Hydrolyzes the sphingolipid ceramide into sphingosine and free fatty acid. The polypeptide is Neutral ceramidase B (dcd2B) (Dictyostelium discoideum (Social amoeba)).